The chain runs to 428 residues: Trigger factor (428 aa).

The 86-residue stretch at 163–248 (GDTAVIDFEG…INEVKAKELP (86 aa)) folds into the PPIase FKBP-type domain.

The protein belongs to the FKBP-type PPIase family. Tig subfamily.

It localises to the cytoplasm. It carries out the reaction [protein]-peptidylproline (omega=180) = [protein]-peptidylproline (omega=0). Its function is as follows. Involved in protein export. Acts as a chaperone by maintaining the newly synthesized protein in an open conformation. Functions as a peptidyl-prolyl cis-trans isomerase. The sequence is that of Trigger factor from Oceanobacillus iheyensis (strain DSM 14371 / CIP 107618 / JCM 11309 / KCTC 3954 / HTE831).